The chain runs to 344 residues: Phenylalanine--tRNA ligase alpha subunit (344 aa).

Residue glutamate 255 coordinates Mg(2+).

This sequence belongs to the class-II aminoacyl-tRNA synthetase family. Phe-tRNA synthetase alpha subunit type 1 subfamily. As to quaternary structure, tetramer of two alpha and two beta subunits. Mg(2+) is required as a cofactor.

It localises to the cytoplasm. It carries out the reaction tRNA(Phe) + L-phenylalanine + ATP = L-phenylalanyl-tRNA(Phe) + AMP + diphosphate + H(+). The protein is Phenylalanine--tRNA ligase alpha subunit of Cytophaga hutchinsonii (strain ATCC 33406 / DSM 1761 / CIP 103989 / NBRC 15051 / NCIMB 9469 / D465).